The following is a 313-amino-acid chain: Probable 5-dehydro-4-deoxyglucarate dehydratase 1 (313 aa).

This sequence belongs to the DapA family.

The enzyme catalyses 5-dehydro-4-deoxy-D-glucarate + H(+) = 2,5-dioxopentanoate + CO2 + H2O. Its pathway is carbohydrate acid metabolism; D-glucarate degradation; 2,5-dioxopentanoate from D-glucarate: step 2/2. The chain is Probable 5-dehydro-4-deoxyglucarate dehydratase 1 from Streptomyces avermitilis (strain ATCC 31267 / DSM 46492 / JCM 5070 / NBRC 14893 / NCIMB 12804 / NRRL 8165 / MA-4680).